Reading from the N-terminus, the 438-residue chain is Vasoactive intestinal polypeptide receptor 2 (438 aa).

A signal peptide spans 1 to 23 (MRTLLPPALLTCWLLAPVNSIHP). Over 24-124 (ECRFHLEIQE…EDESKITFYI (101 aa)) the chain is Extracellular. 3 disulfides stabilise this stretch: cysteine 38–cysteine 61, cysteine 52–cysteine 93, and cysteine 75–cysteine 109. 3 N-linked (GlcNAc...) asparagine glycosylation sites follow: asparagine 58, asparagine 88, and asparagine 92. Residues 125–150 (LVKAIYTLGYSVSLMSLATGSIILCL) form a helical membrane-spanning segment. The Cytoplasmic portion of the chain corresponds to 151–158 (FRKLHCTR). The helical transmembrane segment at 159–180 (NYIHLNLFLSFILRAISVLVKD) threads the bilayer. Residues 181–203 (DVLYSSSGTLHCPDQPSSWVGCK) lie on the Extracellular side of the membrane. A disulfide bridge links cysteine 202 with cysteine 271. Residues 204–228 (LSLVFLQYCIMANFFWLLVEGLYLH) traverse the membrane as a helical segment. Topologically, residues 229–239 (TLLVAMLPPRR) are cytoplasmic. The chain crosses the membrane as a helical span at residues 240–261 (CFLAYLLIGWGLPTVCIGAWTA). At 262-280 (ARLYLEDTGCWDTNDHSVP) the chain is on the extracellular side. Residues 281–304 (WWVIRIPILISIIVNFVLFISIIR) traverse the membrane as a helical segment. Residues 305 to 325 (ILLQKLTSPDVGGNDQSQYKR) lie on the Cytoplasmic side of the membrane. Residues 326-346 (LAKSTLLLIPLFGVHYMVFAV) form a helical membrane-spanning segment. The Extracellular segment spans residues 347–354 (FPISISSK). A helical transmembrane segment spans residues 355-378 (YQILFELCLGSFQGLVVAVLYCFL). Residues 379 to 438 (NSEVQCELKRKWRSRCPTPSASRDYRVCGSSFSRNGSEGALQFHRGSRAQSFLQTETSVI) lie on the Cytoplasmic side of the membrane.

It belongs to the G-protein coupled receptor 2 family. As to quaternary structure, interacts with ADCYAP1/PACAP (via N-terminal extracellular domain); activated by PACAP27 and CAPAC38 neuropeptides. Interacts with VIP; the interaction results in VIPR1 activation. As to expression, expressed in CD4+ T-cells, but not in CD8+ T-cells. Expressed in the T-cell lines Jurkat, Peer, MOLT-4, HSB, YT and SUP-T1, but not in the T-cell lines HARRIS and HuT 78.

Its subcellular location is the cell membrane. In terms of biological role, g protein-coupled receptor activated by the neuropeptides vasoactive intestinal peptide (VIP) and pituitary adenylate cyclase-activating polypeptide (ADCYAP1/PACAP). Binds VIP and both PACAP27 and PACAP38 bioactive peptides with the following order of potency PACAP38 = VIP &gt; PACAP27. Ligand binding causes a conformation change that triggers signaling via guanine nucleotide-binding proteins (G proteins) and modulates the activity of downstream effectors. Activates cAMP-dependent pathway. May be coupled to phospholipase C. This is Vasoactive intestinal polypeptide receptor 2 from Homo sapiens (Human).